A 449-amino-acid polypeptide reads, in one-letter code: Chromosomal replication initiator protein DnaA (449 aa).

Residues 1-83 (MDDSLWSACL…VELEIGSPPT (83 aa)) are domain I, interacts with DnaA modulators. A disordered region spans residues 77 to 114 (EIGSPPTPDQREAATGATRAAPAQRSSEPRQRPVDSNL). Residues 83–112 (TPDQREAATGATRAAPAQRSSEPRQRPVDS) form a domain II region. Over residues 89 to 99 (AATGATRAAPA) the composition is skewed to low complexity. The interval 113–329 (NLNPGFTFDS…GALRRITANA (217 aa)) is domain III, AAA+ region. ATP contacts are provided by glycine 157, glycine 159, lysine 160, and threonine 161. A domain IV, binds dsDNA region spans residues 330 to 449 (QFTGRAIDVD…YDNLLRTLST (120 aa)).

This sequence belongs to the DnaA family. Oligomerizes as a right-handed, spiral filament on DNA at oriC.

It is found in the cytoplasm. In terms of biological role, plays an essential role in the initiation and regulation of chromosomal replication. ATP-DnaA binds to the origin of replication (oriC) to initiate formation of the DNA replication initiation complex once per cell cycle. Binds the DnaA box (a 9 base pair repeat at the origin) and separates the double-stranded (ds)DNA. Forms a right-handed helical filament on oriC DNA; dsDNA binds to the exterior of the filament while single-stranded (ss)DNA is stabiized in the filament's interior. The ATP-DnaA-oriC complex binds and stabilizes one strand of the AT-rich DNA unwinding element (DUE), permitting loading of DNA polymerase. After initiation quickly degrades to an ADP-DnaA complex that is not apt for DNA replication. Binds acidic phospholipids. This chain is Chromosomal replication initiator protein DnaA, found in Halorhodospira halophila (strain DSM 244 / SL1) (Ectothiorhodospira halophila (strain DSM 244 / SL1)).